Reading from the N-terminus, the 523-residue chain is Peptide chain release factor 3 (523 aa).

The 268-residue stretch at 10-277 folds into the tr-type G domain; that stretch reads EKRRTFAIIS…SFVDLAPAPE (268 aa). GTP is bound by residues 19 to 26, 87 to 91, and 141 to 144; these read SHPDAGKT, DTPGH, and NKLD.

Belongs to the TRAFAC class translation factor GTPase superfamily. Classic translation factor GTPase family. PrfC subfamily.

It localises to the cytoplasm. Increases the formation of ribosomal termination complexes and stimulates activities of RF-1 and RF-2. It binds guanine nucleotides and has strong preference for UGA stop codons. It may interact directly with the ribosome. The stimulation of RF-1 and RF-2 is significantly reduced by GTP and GDP, but not by GMP. This is Peptide chain release factor 3 from Lactobacillus acidophilus (strain ATCC 700396 / NCK56 / N2 / NCFM).